Reading from the N-terminus, the 263-residue chain is Hydroxyacylglutathione hydrolase (263 aa).

Zn(2+) contacts are provided by histidine 55, histidine 57, aspartate 59, histidine 60, histidine 117, aspartate 134, and histidine 172.

Belongs to the metallo-beta-lactamase superfamily. Glyoxalase II family. As to quaternary structure, monomer. It depends on Zn(2+) as a cofactor.

It catalyses the reaction an S-(2-hydroxyacyl)glutathione + H2O = a 2-hydroxy carboxylate + glutathione + H(+). It participates in secondary metabolite metabolism; methylglyoxal degradation; (R)-lactate from methylglyoxal: step 2/2. Its function is as follows. Thiolesterase that catalyzes the hydrolysis of S-D-lactoyl-glutathione to form glutathione and D-lactic acid. In Shewanella baltica (strain OS195), this protein is Hydroxyacylglutathione hydrolase.